Consider the following 132-residue polypeptide: S-protein homolog 15 (132 aa).

Positions 1-20 (MSRLIFFILVTAIYFVGNEA) are cleaved as a signal peptide.

This sequence belongs to the plant self-incompatibility (S1) protein family.

The protein resides in the secreted. The sequence is that of S-protein homolog 15 from Arabidopsis thaliana (Mouse-ear cress).